The primary structure comprises 217 residues: Dephospho-CoA kinase (217 aa).

One can recognise a DPCK domain in the interval 4-203 (IVALTGGISS…SHLSRIYNKN (200 aa)). 12 to 17 (SSGKTT) is a binding site for ATP.

This sequence belongs to the CoaE family.

It localises to the cytoplasm. It carries out the reaction 3'-dephospho-CoA + ATP = ADP + CoA + H(+). The protein operates within cofactor biosynthesis; coenzyme A biosynthesis; CoA from (R)-pantothenate: step 5/5. Catalyzes the phosphorylation of the 3'-hydroxyl group of dephosphocoenzyme A to form coenzyme A. This is Dephospho-CoA kinase from Buchnera aphidicola subsp. Acyrthosiphon pisum (strain APS) (Acyrthosiphon pisum symbiotic bacterium).